A 266-amino-acid polypeptide reads, in one-letter code: Shikimate dehydrogenase (NADP(+)) (266 aa).

Residues 14 to 16 (SLS) and Thr61 each bind shikimate. Lys65 functions as the Proton acceptor in the catalytic mechanism. Shikimate is bound by residues Asn85 and Asp100. NADP(+) contacts are provided by residues 124-128 (GAGGA) and Ala210. Shikimate is bound at residue Tyr212. NADP(+) is bound at residue Gly233.

Belongs to the shikimate dehydrogenase family. Homodimer.

The catalysed reaction is shikimate + NADP(+) = 3-dehydroshikimate + NADPH + H(+). It participates in metabolic intermediate biosynthesis; chorismate biosynthesis; chorismate from D-erythrose 4-phosphate and phosphoenolpyruvate: step 4/7. In terms of biological role, involved in the biosynthesis of the chorismate, which leads to the biosynthesis of aromatic amino acids. Catalyzes the reversible NADPH linked reduction of 3-dehydroshikimate (DHSA) to yield shikimate (SA). This is Shikimate dehydrogenase (NADP(+)) from Halobacterium salinarum (strain ATCC 29341 / DSM 671 / R1).